A 103-amino-acid polypeptide reads, in one-letter code: Small ribosomal subunit protein uS10 (103 aa).

Belongs to the universal ribosomal protein uS10 family. Part of the 30S ribosomal subunit.

Its function is as follows. Involved in the binding of tRNA to the ribosomes. The polypeptide is Small ribosomal subunit protein uS10 (Pseudoalteromonas atlantica (strain T6c / ATCC BAA-1087)).